Here is a 467-residue protein sequence, read N- to C-terminus: UDP-N-acetylmuramate--L-alanine ligase (467 aa).

114–120 is a binding site for ATP; sequence GTHGKTT.

The protein belongs to the MurCDEF family.

It is found in the cytoplasm. It carries out the reaction UDP-N-acetyl-alpha-D-muramate + L-alanine + ATP = UDP-N-acetyl-alpha-D-muramoyl-L-alanine + ADP + phosphate + H(+). It functions in the pathway cell wall biogenesis; peptidoglycan biosynthesis. Functionally, cell wall formation. This Rhodopseudomonas palustris (strain ATCC BAA-98 / CGA009) protein is UDP-N-acetylmuramate--L-alanine ligase.